Consider the following 119-residue polypeptide: Large ribosomal subunit protein uL22 (119 aa).

Belongs to the universal ribosomal protein uL22 family. Part of the 50S ribosomal subunit.

Its function is as follows. This protein binds specifically to 23S rRNA; its binding is stimulated by other ribosomal proteins, e.g. L4, L17, and L20. It is important during the early stages of 50S assembly. It makes multiple contacts with different domains of the 23S rRNA in the assembled 50S subunit and ribosome. In terms of biological role, the globular domain of the protein is located near the polypeptide exit tunnel on the outside of the subunit, while an extended beta-hairpin is found that lines the wall of the exit tunnel in the center of the 70S ribosome. In Pelodictyon phaeoclathratiforme (strain DSM 5477 / BU-1), this protein is Large ribosomal subunit protein uL22.